The chain runs to 76 residues: Esculentin-2MT1 (76 aa).

An N-terminal signal peptide occupies residues 1–22; the sequence is MFTMKKPLLLLFFLGTISLSLC. Residues 23 to 37 constitute a propeptide that is removed on maturation; it reads EEERNADEDDGEKEV. A disulfide bond links Cys-70 and Cys-76.

It belongs to the frog skin active peptide (FSAP) family. Esculentin subfamily. As to expression, expressed by the skin glands.

The protein localises to the secreted. Functionally, antimicrobial peptide. The sequence is that of Esculentin-2MT1 from Amolops mantzorum (Sichuan torrent frog).